A 548-amino-acid chain; its full sequence is Nonribosomal peptide synthetase 8 (548 aa).

Positions 1–77 constitute a Carrier domain; sequence MNSLDQWRDT…QLRGENRSGP (77 aa). The residue at position 35 (Ser35) is an O-(pantetheine 4'-phosphoryl)serine. The tract at residues 122–537 is condensation; that stretch reads MAPISSIQEF…FKSLIAELAA (416 aa).

It belongs to the NRP synthetase family.

It participates in mycotoxin biosynthesis. In terms of biological role, nonribosomal peptide synthetase; part of the gene cluster that mediates the biosynthesis of fumonisins B1 (FB1), B2 (FB2), B3 (FB3), and B4 (FB4), which are carcinogenic mycotoxins. Within the pathway FUM14 catalyzes esterification of CoA-activated tricarballylic acid to the C-14 and C-15 hydroxyls of the fumonisin backbone. The biosynthesis starts with the FUM1-catalyzed carbon chain assembly from one molecule of acetyl-CoA, eight molecules of malonyl-CoA, and two molecules of methionine (in S-adenosyl form). The C18 polyketide chain is released from the enzyme by a nucleophilic attack of a carbanion, which is derived from R-carbon of alanine by decarboxylation, on the carbonyl carbon of polyketide acyl chain. This step is catalyzed by the pyridoxal 5'-phosphate-dependent aminoacyl transferase FUM8. The resultant 3-keto intermediate is then stereospecifically reduced to a 3-hydroxyl product by reductase FUM13. Subsequent oxidations at C-10 by the cytochrome P450 monooxygenase FUM2, C-14 and C-15 by FUM6, FUM12 or FUM15, tricarballylic esterification of the hydroxyl groups on C-14 and C-15 by acyltransferase FUM14, and C-5 hydroxylation by 2-keto-glutarate-dependent dioxygenase FUM3 furnish the biosynthesis of fumonisins. The tricarballylic moieties are most likely derived from the citric acid cycle, and their addition to the carbon backbone may involve FUM7, FUM10, FUM11 and FUM14. In Gibberella moniliformis (strain M3125 / FGSC 7600) (Maize ear and stalk rot fungus), this protein is Nonribosomal peptide synthetase 8.